The following is a 391-amino-acid chain: 3-ketoacyl-CoA thiolase (391 aa).

The Acyl-thioester intermediate role is filled by cysteine 95. Catalysis depends on proton acceptor residues histidine 347 and cysteine 377.

This sequence belongs to the thiolase-like superfamily. Thiolase family. In terms of assembly, heterotetramer of two alpha chains (FadB) and two beta chains (FadA).

The protein resides in the cytoplasm. The catalysed reaction is an acyl-CoA + acetyl-CoA = a 3-oxoacyl-CoA + CoA. It participates in lipid metabolism; fatty acid beta-oxidation. Its function is as follows. Catalyzes the final step of fatty acid oxidation in which acetyl-CoA is released and the CoA ester of a fatty acid two carbons shorter is formed. This Ectopseudomonas mendocina (strain ymp) (Pseudomonas mendocina) protein is 3-ketoacyl-CoA thiolase.